The following is a 249-amino-acid chain: Protein twisted gastrulation (249 aa).

Positions 1–23 are cleaved as a signal peptide; the sequence is MQLLCYFVILFVGIAPWSSLAND. Asn199 carries N-linked (GlcNAc...) asparagine glycosylation.

The protein belongs to the twisted gastrulation protein family. As to quaternary structure, component of a complex composed of dpp, sog and tsg. As to expression, first appears in stage 4 embryos, expressed in two domains: a broad mid-dorsal saddle and an anterior cap, expression between the domains is continuous across the dorsal midline. At stage 5, expression is refined into 4 graded stripes in the mid-dorsal region and a paired domain in the anterior region. During stages 7 and 8, anterior expression fades and the mid dorsal stripes are located between the anterior and posterior transverse furrow (ATF and PTF). Expressing cells become incorporated into the deepening PTF.

It is found in the secreted. Involved in dorsal-ventral patterning. Required for specification of a narrow strip of dorsal midline cells that will give rise to the amnioserosa, but not for specification of dorsal ectoderm cells. Inhibits BMP signaling; enhances the binding of sog to dpp, thus enhancing the antagonistic activity of sog. In Drosophila melanogaster (Fruit fly), this protein is Protein twisted gastrulation (tsg).